Reading from the N-terminus, the 371-residue chain is uncharacterized protein (371 aa).

Residues 110–140 form the 4Fe-4S ferredoxin-type domain; it reads MEKFIDFDRCNKCGECARKICKAKWTPLNYL.

This is an uncharacterized protein from Methanocaldococcus jannaschii (strain ATCC 43067 / DSM 2661 / JAL-1 / JCM 10045 / NBRC 100440) (Methanococcus jannaschii).